Consider the following 251-residue polypeptide: Triosephosphate isomerase (251 aa).

9–11 (NWK) contributes to the substrate binding site. Histidine 95 (electrophile) is an active-site residue. The active-site Proton acceptor is glutamate 167. Substrate contacts are provided by residues glycine 173, serine 213, and 234 to 235 (GG). Serine 213 carries the phosphoserine modification.

It belongs to the triosephosphate isomerase family. Homodimer.

It localises to the cytoplasm. The catalysed reaction is D-glyceraldehyde 3-phosphate = dihydroxyacetone phosphate. The protein operates within carbohydrate biosynthesis; gluconeogenesis. Its pathway is carbohydrate degradation; glycolysis; D-glyceraldehyde 3-phosphate from glycerone phosphate: step 1/1. In terms of biological role, involved in the gluconeogenesis. Catalyzes stereospecifically the conversion of dihydroxyacetone phosphate (DHAP) to D-glyceraldehyde-3-phosphate (G3P). This is Triosephosphate isomerase from Bacillus cereus (strain G9842).